The sequence spans 917 residues: Protein translocase subunit SecA (917 aa).

ATP contacts are provided by residues Q87, 105-109 (GEGKT), and D516. Zn(2+) is bound by residues C901, C903, C912, and H913.

The protein belongs to the SecA family. Monomer and homodimer. Part of the essential Sec protein translocation apparatus which comprises SecA, SecYEG and auxiliary proteins SecDF-YajC and YidC. The cofactor is Zn(2+).

The protein localises to the cell inner membrane. Its subcellular location is the cytoplasm. The enzyme catalyses ATP + H2O + cellular proteinSide 1 = ADP + phosphate + cellular proteinSide 2.. In terms of biological role, part of the Sec protein translocase complex. Interacts with the SecYEG preprotein conducting channel. Has a central role in coupling the hydrolysis of ATP to the transfer of proteins into and across the cell membrane, serving both as a receptor for the preprotein-SecB complex and as an ATP-driven molecular motor driving the stepwise translocation of polypeptide chains across the membrane. In Acidovorax sp. (strain JS42), this protein is Protein translocase subunit SecA.